Reading from the N-terminus, the 154-residue chain is NADPH-dependent 7-cyano-7-deazaguanine reductase (154 aa).

The active-site Thioimide intermediate is the Cys-52. The Proton donor role is filled by Asp-59. Residues 74–76 (VES) and 93–94 (HE) each bind substrate.

The protein belongs to the GTP cyclohydrolase I family. QueF type 1 subfamily.

The protein resides in the cytoplasm. The catalysed reaction is 7-aminomethyl-7-carbaguanine + 2 NADP(+) = 7-cyano-7-deazaguanine + 2 NADPH + 3 H(+). Its pathway is tRNA modification; tRNA-queuosine biosynthesis. Functionally, catalyzes the NADPH-dependent reduction of 7-cyano-7-deazaguanine (preQ0) to 7-aminomethyl-7-deazaguanine (preQ1). This Ruegeria sp. (strain TM1040) (Silicibacter sp.) protein is NADPH-dependent 7-cyano-7-deazaguanine reductase.